The primary structure comprises 90 residues: RNA-binding protein Hfq (90 aa).

Residues glutamate 9–valine 68 enclose the Sm domain.

It belongs to the Hfq family. Homohexamer.

RNA chaperone that binds small regulatory RNA (sRNAs) and mRNAs to facilitate mRNA translational regulation in response to envelope stress, environmental stress and changes in metabolite concentrations. Also binds with high specificity to tRNAs. The chain is RNA-binding protein Hfq from Halorhodospira halophila (strain DSM 244 / SL1) (Ectothiorhodospira halophila (strain DSM 244 / SL1)).